The following is a 280-amino-acid chain: Pantothenate synthetase (280 aa).

ATP is bound at residue 30-37 (MGYLHEGH). His-37 (proton donor) is an active-site residue. Gln-61 is a (R)-pantoate binding site. Gln-61 is a beta-alanine binding site. ATP is bound at residue 147–150 (GQKD). A (R)-pantoate-binding site is contributed by Gln-153. ATP contacts are provided by residues Val-176 and 184–187 (MSSR).

The protein belongs to the pantothenate synthetase family. In terms of assembly, homodimer.

The protein resides in the cytoplasm. It carries out the reaction (R)-pantoate + beta-alanine + ATP = (R)-pantothenate + AMP + diphosphate + H(+). It functions in the pathway cofactor biosynthesis; (R)-pantothenate biosynthesis; (R)-pantothenate from (R)-pantoate and beta-alanine: step 1/1. In terms of biological role, catalyzes the condensation of pantoate with beta-alanine in an ATP-dependent reaction via a pantoyl-adenylate intermediate. This Thermotoga neapolitana protein is Pantothenate synthetase.